Consider the following 200-residue polypeptide: GTP-dependent dephospho-CoA kinase (200 aa).

Residues Asp56, Val57, Val58, Asp75, and Glu132 each coordinate GTP.

It belongs to the GTP-dependent DPCK family.

It carries out the reaction 3'-dephospho-CoA + GTP = GDP + CoA + H(+). Its pathway is cofactor biosynthesis; coenzyme A biosynthesis. In terms of biological role, catalyzes the GTP-dependent phosphorylation of the 3'-hydroxyl group of dephosphocoenzyme A to form coenzyme A (CoA). The sequence is that of GTP-dependent dephospho-CoA kinase from Caldivirga maquilingensis (strain ATCC 700844 / DSM 13496 / JCM 10307 / IC-167).